The primary structure comprises 1349 residues: Adhesion G protein-coupled receptor F5 (1349 aa).

Residues 1-24 (MKSSRTVTLYFVLIVICSSEATWS) form the signal peptide. Residues 25–1016 (RPAEPIVHPL…PGSLLKILLD (992 aa)) lie on the Extracellular side of the membrane. Asparagine 73, asparagine 94, asparagine 185, asparagine 254, asparagine 270, asparagine 286, asparagine 299, asparagine 326, asparagine 337, asparagine 349, asparagine 396, asparagine 470, asparagine 503, asparagine 538, asparagine 649, and asparagine 666 each carry an N-linked (GlcNAc...) asparagine glycan. One can recognise an SEA domain in the interval 163–271 (PETYITLKIK…NSFQGTPSNE (109 aa)). 3 Ig-like domains span residues 268–366 (PSNE…LDVT), 367–464 (PIRI…IAVT), and 469–559 (ANLT…KDVT). Cysteine 291 and cysteine 348 are disulfide-bonded. Cysteine 389 and cysteine 447 are disulfide-bonded. Cysteine 490 and cysteine 543 are disulfide-bonded. Residue serine 819 is modified to Phosphoserine. N-linked (GlcNAc...) asparagine glycosylation is found at asparagine 820, asparagine 958, and asparagine 963. Positions 842–1006 (TPPFLFHPNV…SILMSPDSPD (165 aa)) constitute a GAIN-B domain. Intrachain disulfides connect cysteine 954/cysteine 988 and cysteine 973/cysteine 990. Residues 954–1006 (CVFWNFSLANNTGGWDSSGCTVEDDGRDNRDRVFCKCNHLTSFSILMSPDSPD) form a GPS region. Residues 994–1009 (TSFSILMSPDSPDPGS) form a tethered agonist region. Residues 1017-1036 (IISYIGLGFSIVSLAACLVV) form a helical membrane-spanning segment. Residues 1037 to 1055 (EAMVWKSVTKNRTSYMRHI) are Cytoplasmic-facing. The helical transmembrane segment at 1056-1078 (CIVNIALCLLIADIWFIVAGAIH) threads the bilayer. Residues 1079-1097 (DGHYPLNETACVAATFFIH) are Extracellular-facing. Asparagine 1085 carries N-linked (GlcNAc...) asparagine glycosylation. Residues 1098–1120 (FFYLSVFFWMLTLGLMLFYRLIF) traverse the membrane as a helical segment. Residues 1121–1131 (ILHDASKSTQK) lie on the Cytoplasmic side of the membrane. The chain crosses the membrane as a helical span at residues 1132-1154 (AIAFSLGYGCPLIISSITVGVTQ). Residues 1155 to 1173 (PQEVYMRKNACWLNWEDTR) are Extracellular-facing. The helical transmembrane segment at 1174–1196 (ALLAFAIPALIIVVVNVSITVVV) threads the bilayer. The Cytoplasmic portion of the chain corresponds to 1197–1216 (ITKILRPSVGDKPGKQEKSS). Residues 1217–1239 (LFQISKSIGVLTPLLGLTWGFGL) traverse the membrane as a helical segment. The Extracellular portion of the chain corresponds to 1240-1248 (ATVIQGSNA). The chain crosses the membrane as a helical span at residues 1249–1271 (VFHIIFTLLNAFQGLFILLFGCL). Topologically, residues 1272 to 1349 (WDQKVQEALL…NSSSAYSLLN (78 aa)) are cytoplasmic. Threonine 1303 is subject to Phosphothreonine. A Phosphoserine modification is found at serine 1310. A compositionally biased stretch (low complexity) spans 1329–1343 (STPETTSSSVENSSS). Residues 1329 to 1349 (STPETTSSSVENSSSAYSLLN) are disordered.

The protein belongs to the G-protein coupled receptor 2 family. Adhesion G-protein coupled receptor (ADGR) subfamily. As to quaternary structure, homodimer; disulfide-linked. Heterodimer of 2 chains generated by proteolytic processing; the large extracellular N-terminal fragment and the membrane-bound C-terminal fragment predominantly remain associated and non-covalently linked. Fragment generates by the processing enzyme furin remains attached to the extracellular N-terminal fragment. Interacts (via N-terminal extracellular domain) with SFTPD. Post-translationally, highly glycosylated. In terms of processing, proteolytically cleaved at multiple sites: one in the GPS region of the GAIN-B domain (S1 site) and the other in the SEA domain (S2 site). The proteolytic cleavage at S1 site generates an extracellular subunit and a seven-transmembrane subunit. The proteolytic cleavage at S2 site generates a fragment that undergoes proteolytic cleavage by the processing enzyme furin. In terms of tissue distribution, highly expressed in the lung and to a much lesser extent in the kidney and heart. Dense localization in alveolar walls of the lung and in the intercalated cells of the collecting duct of the kidney.

Its subcellular location is the cell membrane. As an adhesion G protein-coupled receptor (aGPCR) exhibits a large N-terminal extracellular domain containing highly conserved GPCR autoproteolysis-inducing (GAIN) domain. During synthesis, intracellular autoproteolytic processing of nascent chain within the GAIN domain generates a mature protein, consisting of an N-terminal fragment that is non-covalently linked to the C-terminal fragment. The mature protein is routed to the plasma membrane where the N- and C-terminal fragments remain associated, forming the holoreceptor. Dissociation of the aGPCR fragments stimulates G protein signaling through the action of the tethered-peptide agonist stalk that is occluded within the GAIN domain in the holoreceptor form. This dissociation might be induced by ligand binding, such as that of sFNDC4. Its function is as follows. Receptor that plays a critical role in lung surfactant homeostasis. May play a role in controlling adipocyte function. Functionally, adhesion G protein-coupled receptor. In alveolar type II (ATII or AT2) cells, required for normal lung surfactant homeostasis. Modulation of both surfactant secretion and uptake by ATII cells is mediated by the downstream activation of GNAQ/GNA11 proteins and may be a consequence of increased cortical F-actin assembly induced by ADGRF5 activation. In the kidney, may play a role in the regulation of acid excretion into the primary urine, possibly by regulating the surface expression of V-ATPase proton pump. As a receptor for soluble FNDC4 (sFNDC4), required for proper systemic glucose tolerance, specifically sensitizing white adipose tissue to insulin. Also plays a role in sFNDC4-induced decrease of local inflammation in white adipose tissue. In Rattus norvegicus (Rat), this protein is Adhesion G protein-coupled receptor F5 (Adgrf5).